The sequence spans 391 residues: Formate-dependent phosphoribosylglycinamide formyltransferase (391 aa).

N(1)-(5-phospho-beta-D-ribosyl)glycinamide-binding positions include 20 to 21 and E80; that span reads EL. ATP is bound by residues R112, K153, 158–163, 193–196, and E201; these read SSGKGQ and EGFV. The 190-residue stretch at 117-306 folds into the ATP-grasp domain; it reads RLAAEELGLP…EFALHVRAFT (190 aa). Mg(2+) is bound by residues E265 and E277. N(1)-(5-phospho-beta-D-ribosyl)glycinamide contacts are provided by residues D284, K354, and 361-362; that span reads RR.

It belongs to the PurK/PurT family. As to quaternary structure, homodimer.

The catalysed reaction is N(1)-(5-phospho-beta-D-ribosyl)glycinamide + formate + ATP = N(2)-formyl-N(1)-(5-phospho-beta-D-ribosyl)glycinamide + ADP + phosphate + H(+). It functions in the pathway purine metabolism; IMP biosynthesis via de novo pathway; N(2)-formyl-N(1)-(5-phospho-D-ribosyl)glycinamide from N(1)-(5-phospho-D-ribosyl)glycinamide (formate route): step 1/1. In terms of biological role, involved in the de novo purine biosynthesis. Catalyzes the transfer of formate to 5-phospho-ribosyl-glycinamide (GAR), producing 5-phospho-ribosyl-N-formylglycinamide (FGAR). Formate is provided by PurU via hydrolysis of 10-formyl-tetrahydrofolate. In Vibrio cholerae serotype O1 (strain ATCC 39315 / El Tor Inaba N16961), this protein is Formate-dependent phosphoribosylglycinamide formyltransferase.